Here is a 170-residue protein sequence, read N- to C-terminus: Adenine phosphoribosyltransferase (170 aa).

This sequence belongs to the purine/pyrimidine phosphoribosyltransferase family. As to quaternary structure, homodimer.

The protein localises to the cytoplasm. It carries out the reaction AMP + diphosphate = 5-phospho-alpha-D-ribose 1-diphosphate + adenine. Its pathway is purine metabolism; AMP biosynthesis via salvage pathway; AMP from adenine: step 1/1. Functionally, catalyzes a salvage reaction resulting in the formation of AMP, that is energically less costly than de novo synthesis. In Trichodesmium erythraeum (strain IMS101), this protein is Adenine phosphoribosyltransferase.